Consider the following 359-residue polypeptide: Guanine nucleotide-binding protein alpha-4 subunit (359 aa).

A lipid anchor (N-myristoyl glycine) is attached at Gly2. Cys3 carries S-palmitoyl cysteine lipidation. The G-alpha domain maps to 31–359; it reads GEIKLLLLGA…RNNLYLCGLY (329 aa). The tract at residues 34-47 is G1 motif; sequence KLLLLGAGESGKST. GTP is bound by residues 39-46, 178-184, 203-207, 272-275, and Ala331; these read GAGESGKS, LRARVKS, DVGGQ, and NKMD. Ser46 is a binding site for Mg(2+). The segment at 176-184 is G2 motif; that stretch reads DILRARVKS. The G3 motif stretch occupies residues 199 to 208; that stretch reads FKMFDVGGQR. The tract at residues 268 to 275 is G4 motif; sequence ILFLNKMD. The G5 motif stretch occupies residues 329 to 334; the sequence is TCATDT.

It belongs to the G-alpha family. G(i/o/t/z) subfamily. G proteins are composed of 3 units; alpha, beta and gamma. The alpha chain contains the guanine nucleotide binding site. In terms of tissue distribution, expressed in ASI neurons.

Guanine nucleotide-binding proteins (G proteins) are involved as modulators or transducers in various transmembrane signaling systems. Acts in concert with npr-15 to activate TGF-beta-like daf-7 secretion in the ASI neuron, thereby promoting larval development and inhibition of dauer diapause. The chain is Guanine nucleotide-binding protein alpha-4 subunit (gpa-4) from Caenorhabditis elegans.